The primary structure comprises 681 residues: DNA ligase (681 aa).

Residues 33–37 (DGQFD), 83–84 (SL), and Glu113 contribute to the NAD(+) site. The active-site N6-AMP-lysine intermediate is Lys115. The NAD(+) site is built by Arg136, Glu176, Lys292, and Lys316. Zn(2+) is bound by residues Cys410, Cys413, Cys429, and Cys435. A BRCT domain is found at 599–681 (SIPRNLEGLS…RALLADGPPA (83 aa)).

It belongs to the NAD-dependent DNA ligase family. LigA subfamily. It depends on Mg(2+) as a cofactor. Requires Mn(2+) as cofactor.

The enzyme catalyses NAD(+) + (deoxyribonucleotide)n-3'-hydroxyl + 5'-phospho-(deoxyribonucleotide)m = (deoxyribonucleotide)n+m + AMP + beta-nicotinamide D-nucleotide.. Its function is as follows. DNA ligase that catalyzes the formation of phosphodiester linkages between 5'-phosphoryl and 3'-hydroxyl groups in double-stranded DNA using NAD as a coenzyme and as the energy source for the reaction. It is essential for DNA replication and repair of damaged DNA. This chain is DNA ligase, found in Mycobacteroides abscessus (strain ATCC 19977 / DSM 44196 / CCUG 20993 / CIP 104536 / JCM 13569 / NCTC 13031 / TMC 1543 / L948) (Mycobacterium abscessus).